The chain runs to 145 residues: ATP synthase epsilon chain (145 aa).

Residues 100–123 form a disordered region; sequence RAQRAKQRAEDAIKTASEKHDSDE. A compositionally biased stretch (basic and acidic residues) spans 106–123; the sequence is QRAEDAIKTASEKHDSDE.

It belongs to the ATPase epsilon chain family. As to quaternary structure, F-type ATPases have 2 components, CF(1) - the catalytic core - and CF(0) - the membrane proton channel. CF(1) has five subunits: alpha(3), beta(3), gamma(1), delta(1), epsilon(1). CF(0) has three main subunits: a, b and c.

It is found in the cell membrane. Its function is as follows. Produces ATP from ADP in the presence of a proton gradient across the membrane. The protein is ATP synthase epsilon chain of Latilactobacillus sakei subsp. sakei (strain 23K) (Lactobacillus sakei subsp. sakei).